A 216-amino-acid chain; its full sequence is Somatotropin (216 aa).

Positions methionine 1–alanine 26 are cleaved as a signal peptide. Histidine 45 lines the Zn(2+) pocket. The cysteines at positions 78 and 189 are disulfide-linked. Serine 131 carries the phosphoserine modification. Position 198 (glutamate 198) interacts with Zn(2+). Cysteine 206 and cysteine 214 are joined by a disulfide.

The protein belongs to the somatotropin/prolactin family.

The protein localises to the secreted. Functionally, plays an important role in growth control. Its major role in stimulating body growth is to stimulate the liver and other tissues to secrete IGF1. It stimulates both the differentiation and proliferation of myoblasts. It also stimulates amino acid uptake and protein synthesis in muscle and other tissues. The sequence is that of Somatotropin (GH1) from Oryctolagus cuniculus (Rabbit).